We begin with the raw amino-acid sequence, 250 residues long: NAD(P)H-quinone oxidoreductase subunit K (250 aa).

[4Fe-4S] cluster contacts are provided by Cys-63, Cys-64, Cys-128, and Cys-159.

This sequence belongs to the complex I 20 kDa subunit family. As to quaternary structure, NDH-1 can be composed of about 15 different subunits; different subcomplexes with different compositions have been identified which probably have different functions. [4Fe-4S] cluster serves as cofactor.

It is found in the cellular thylakoid membrane. It catalyses the reaction a plastoquinone + NADH + (n+1) H(+)(in) = a plastoquinol + NAD(+) + n H(+)(out). The enzyme catalyses a plastoquinone + NADPH + (n+1) H(+)(in) = a plastoquinol + NADP(+) + n H(+)(out). Its function is as follows. NDH-1 shuttles electrons from an unknown electron donor, via FMN and iron-sulfur (Fe-S) centers, to quinones in the respiratory and/or the photosynthetic chain. The immediate electron acceptor for the enzyme in this species is believed to be plastoquinone. Couples the redox reaction to proton translocation, and thus conserves the redox energy in a proton gradient. Cyanobacterial NDH-1 also plays a role in inorganic carbon-concentration. In Rippkaea orientalis (strain PCC 8801 / RF-1) (Cyanothece sp. (strain PCC 8801)), this protein is NAD(P)H-quinone oxidoreductase subunit K.